The chain runs to 94 residues: Small ribosomal subunit protein uS17 (94 aa).

Residues 1-22 (MASSSTEGQAAARGRKKSWTGK) are disordered.

The protein belongs to the universal ribosomal protein uS17 family. Part of the 30S ribosomal subunit.

One of the primary rRNA binding proteins, it binds specifically to the 5'-end of 16S ribosomal RNA. This Chlorobium luteolum (strain DSM 273 / BCRC 81028 / 2530) (Pelodictyon luteolum) protein is Small ribosomal subunit protein uS17.